A 336-amino-acid chain; its full sequence is Dihydroorotate dehydrogenase (quinone) (336 aa).

FMN-binding positions include 62–66 (AGLDK) and Thr86. Lys66 lines the substrate pocket. 111–115 (NRMGF) contacts substrate. The FMN site is built by Asn139 and Asn172. Position 172 (Asn172) interacts with substrate. Catalysis depends on Ser175, which acts as the Nucleophile. Asn177 contributes to the substrate binding site. Residues Lys217 and Thr245 each contribute to the FMN site. 246 to 247 (NT) provides a ligand contact to substrate. Residues Gly268, Gly297, and 318–319 (YS) each bind FMN.

The protein belongs to the dihydroorotate dehydrogenase family. Type 2 subfamily. As to quaternary structure, monomer. It depends on FMN as a cofactor.

It localises to the cell membrane. The catalysed reaction is (S)-dihydroorotate + a quinone = orotate + a quinol. The protein operates within pyrimidine metabolism; UMP biosynthesis via de novo pathway; orotate from (S)-dihydroorotate (quinone route): step 1/1. In terms of biological role, catalyzes the conversion of dihydroorotate to orotate with quinone as electron acceptor. The polypeptide is Dihydroorotate dehydrogenase (quinone) (Salmonella typhi).